The chain runs to 218 residues: Kappa-scoloptoxin(11)-Ssd1b (218 aa).

The first 16 residues, M1–S16, serve as a signal peptide directing secretion. The propeptide occupies S17–R25.

Post-translationally, contains 8 disulfide bonds. In terms of tissue distribution, expressed by the venom gland.

The protein resides in the secreted. In terms of biological role, voltage-gated potassium channel inhibitor. The chain is Kappa-scoloptoxin(11)-Ssd1b from Scolopendra dehaani (Thai centipede).